Reading from the N-terminus, the 918-residue chain is DNA mismatch repair protein MutS (918 aa).

Residue 662–669 (GPNMAGKS) coordinates ATP.

It belongs to the DNA mismatch repair MutS family.

Its function is as follows. This protein is involved in the repair of mismatches in DNA. It is possible that it carries out the mismatch recognition step. This protein has a weak ATPase activity. The polypeptide is DNA mismatch repair protein MutS (Sorangium cellulosum (strain So ce56) (Polyangium cellulosum (strain So ce56))).